Consider the following 277-residue polypeptide: Uridine-cytidine kinase 1 (277 aa).

The segment at 1–30 (MASAGGGGSESAAPEADRPQPRPFLIGVSG) is disordered. ATP is bound at residue 30–38 (GGTASGKST). The substrate site is built by Asp87, Tyr115, His120, Arg169, Arg178, and Gln186. Asp215 serves as a coordination point for ATP. A compositionally biased stretch (basic residues) spans 238-250 (RHRGGPNGRNHKR). Positions 238–277 (RHRGGPNGRNHKRTFPEPGDHPGVLATGKRSHLESSSRPH) are disordered. Position 251 is a phosphothreonine (Thr251). Basic and acidic residues predominate over residues 268–277 (SHLESSSRPH).

Belongs to the uridine kinase family.

The enzyme catalyses uridine + ATP = UMP + ADP + H(+). It carries out the reaction cytidine + ATP = CMP + ADP + H(+). The protein operates within pyrimidine metabolism; CTP biosynthesis via salvage pathway; CTP from cytidine: step 1/3. Its pathway is pyrimidine metabolism; UMP biosynthesis via salvage pathway; UMP from uridine: step 1/1. Functionally, phosphorylates uridine and cytidine to uridine monophosphate and cytidine monophosphate. Does not phosphorylate deoxyribonucleosides or purine ribonucleosides. Can use ATP or GTP as a phosphate donor. This Mus musculus (Mouse) protein is Uridine-cytidine kinase 1 (Uck1).